We begin with the raw amino-acid sequence, 163 residues long: MSKGLLLLLLLSMGGTWASKEPLRPRCRPINATLAVEKEGCPVCITVNTTICAGYCPTMTRVLQGVLPALPQVVCNYRDVRFESIRLPGCPRGVNPVVSYAVALSCQCALCRRSTTDCGGPKDHPLTCDDPRFQASSSSKAPPPSLPSPSRLPGPSDTPILPQ.

The N-terminal stretch at 1 to 18 is a signal peptide; the sequence is MSKGLLLLLLLSMGGTWA. 6 cysteine pairs are disulfide-bonded: Cys27-Cys75, Cys41-Cys90, Cys44-Cys128, Cys52-Cys106, Cys56-Cys108, and Cys111-Cys118. N-linked (GlcNAc...) asparagine glycosylation is found at Asn31 and Asn48. The disordered stretch occupies residues 129–163; it reads DDPRFQASSSSKAPPPSLPSPSRLPGPSDTPILPQ. The segment covering 141–152 has biased composition (pro residues); that stretch reads APPPSLPSPSRL.

This sequence belongs to the glycoprotein hormones subunit beta family. Expressed in placenta, testis and pituitary.

The protein localises to the secreted. The sequence is that of Choriogonadotropin subunit beta variant 2 (CGB2) from Homo sapiens (Human).